The sequence spans 802 residues: Leucine--tRNA ligase (802 aa).

The short motif at 40–51 (PYPSGAGLHVGH) is the 'HIGH' region element. The short motif at 576-580 (KMSKS) is the 'KMSKS' region element. Lys579 serves as a coordination point for ATP.

It belongs to the class-I aminoacyl-tRNA synthetase family.

It localises to the cytoplasm. The enzyme catalyses tRNA(Leu) + L-leucine + ATP = L-leucyl-tRNA(Leu) + AMP + diphosphate. The sequence is that of Leucine--tRNA ligase from Bacillus mycoides (strain KBAB4) (Bacillus weihenstephanensis).